A 972-amino-acid chain; its full sequence is FHF complex subunit HOOK-interacting protein 1B (972 aa).

Disordered stretches follow at residues 465-496 (APSP…VPRP), 510-547 (SLSG…AGEL), 573-642 (SAPY…PGSW), and 710-733 (SFTC…NQLP). At S467 the chain carries Phosphoserine. Low complexity predominate over residues 479–490 (GPGSPSVDSSSV). Residues S510, S523, S529, and S533 each carry the phosphoserine modification. Low complexity predominate over residues 523 to 535 (SPGLSASPASSPG). Gly residues predominate over residues 618–627 (GLAGGAGEGP). Phosphoserine is present on residues S859 and S897.

This sequence belongs to the FHIP family. Component of the FTS/Hook/FHIP complex (FHF complex), composed of AKTIP/FTS, FHIP1B, and one or more members of the Hook family of proteins HOOK1, HOOK2, and HOOK3. The FHF complex associates with the homotypic vesicular sorting complex (the HOPS complex).

Component of the FTS/Hook/FHIP complex (FHF complex). The FHF complex may function to promote vesicle trafficking and/or fusion via the homotypic vesicular protein sorting complex (the HOPS complex). FHF complex promotes the distribution of AP-4 complex to the perinuclear area of the cell. The protein is FHF complex subunit HOOK-interacting protein 1B (FHIP1B) of Pongo abelii (Sumatran orangutan).